The following is a 489-amino-acid chain: NADH-ubiquinone oxidoreductase chain 2 (489 aa).

Transmembrane regions (helical) follow at residues 9–29 (LFPEIFLINATIILLIYGVVF), 47–67 (LGLLSVLITILLVAVGSPLAV), 80–100 (FTYFCQIFLLLSTASTMVMCL), 114–134 (IVLILLSTCSMLFMISAYDLI), 168–188 (FILGAFSSGILLFGCSMIYGF), 216–236 (IFMGILFIAVGFLFKITAVPF), 248–268 (PTIVTAFFSIAPKISILANML), 280–300 (WQQLFFFCSIASMILGALAAM), 309–329 (LAYSSIGHVGYLLIGFSCGTI), 335–355 (LLIGIFIYVLMTVNVFAIVLA), 376–396 (ILAITLSITMFSYAGIPPLAG), 401–421 (FYLFFAALGCGAYLLALIGVV), and 459–479 (LAITVFFITFFFLYPSPLFLV).

This sequence belongs to the complex I subunit 2 family.

It localises to the mitochondrion inner membrane. The catalysed reaction is a ubiquinone + NADH + 5 H(+)(in) = a ubiquinol + NAD(+) + 4 H(+)(out). Its function is as follows. Core subunit of the mitochondrial membrane respiratory chain NADH dehydrogenase (Complex I) that is believed to belong to the minimal assembly required for catalysis. Complex I functions in the transfer of electrons from NADH to the respiratory chain. The immediate electron acceptor for the enzyme is believed to be ubiquinone. The protein is NADH-ubiquinone oxidoreductase chain 2 (ND2) of Marchantia polymorpha (Common liverwort).